Here is a 307-residue protein sequence, read N- to C-terminus: Bifunctional protein FolD 3 (307 aa).

Residues 169-171 (GRS), serine 194, and isoleucine 235 contribute to the NADP(+) site.

This sequence belongs to the tetrahydrofolate dehydrogenase/cyclohydrolase family. Homodimer.

The enzyme catalyses (6R)-5,10-methylene-5,6,7,8-tetrahydrofolate + NADP(+) = (6R)-5,10-methenyltetrahydrofolate + NADPH. The catalysed reaction is (6R)-5,10-methenyltetrahydrofolate + H2O = (6R)-10-formyltetrahydrofolate + H(+). The protein operates within one-carbon metabolism; tetrahydrofolate interconversion. Its function is as follows. Catalyzes the oxidation of 5,10-methylenetetrahydrofolate to 5,10-methenyltetrahydrofolate and then the hydrolysis of 5,10-methenyltetrahydrofolate to 10-formyltetrahydrofolate. The polypeptide is Bifunctional protein FolD 3 (Ectopseudomonas mendocina (strain ymp) (Pseudomonas mendocina)).